The following is a 34-amino-acid chain: Photosystem II reaction center protein M (34 aa).

The helical transmembrane segment at 5-25 threads the bilayer; that stretch reads ILGLMAVALFILIPTSFLLIL.

The protein belongs to the PsbM family. In terms of assembly, PSII is composed of 1 copy each of membrane proteins PsbA, PsbB, PsbC, PsbD, PsbE, PsbF, PsbH, PsbI, PsbJ, PsbK, PsbL, PsbM, PsbT, PsbX, PsbY, PsbZ, Psb30/Ycf12, at least 3 peripheral proteins of the oxygen-evolving complex and a large number of cofactors. It forms dimeric complexes.

The protein localises to the plastid. The protein resides in the chloroplast thylakoid membrane. In terms of biological role, one of the components of the core complex of photosystem II (PSII). PSII is a light-driven water:plastoquinone oxidoreductase that uses light energy to abstract electrons from H(2)O, generating O(2) and a proton gradient subsequently used for ATP formation. It consists of a core antenna complex that captures photons, and an electron transfer chain that converts photonic excitation into a charge separation. This subunit is found at the monomer-monomer interface. The protein is Photosystem II reaction center protein M of Tupiella akineta (Green alga).